The sequence spans 92 residues: Small ribosomal subunit protein uS19 (92 aa).

The protein belongs to the universal ribosomal protein uS19 family.

Protein S19 forms a complex with S13 that binds strongly to the 16S ribosomal RNA. This Staphylococcus carnosus (strain TM300) protein is Small ribosomal subunit protein uS19.